Here is a 240-residue protein sequence, read N- to C-terminus: MFYSGLLTEGGRKETDMREAASLRQQRRMKQAVQFIHKDSADLLPLDGLKKLGSSKDTQPHNILQRRLMETNLSKLRSTRVPWASKTNKFNQAKSEGLKKCEDEDMILVSCQCAGKDVKALVDTGCQYNLISSACVDRLGLKDHVKSHKHEGEKLSLPRHLKVVGQIEHLMITVGSLRLDCQAAVVDDNEKSLSLGLQTLRSLKCIINLDKHRLIVGKTDKEEIPFVETVSVNDDNTSEA.

The polypeptide is Nuclear receptor-interacting protein 3 (Nrip3) (Mus musculus (Mouse)).